A 178-amino-acid chain; its full sequence is RNA pyrophosphohydrolase (178 aa).

A Nudix hydrolase domain is found at 18 to 171 (PYRPCVGLMV…KRKVYEQVVA (154 aa)). Positions 59-80 (GGIDKGEDPAQAALRELYEETG) match the Nudix box motif.

It belongs to the Nudix hydrolase family. RppH subfamily. It depends on a divalent metal cation as a cofactor.

Functionally, accelerates the degradation of transcripts by removing pyrophosphate from the 5'-end of triphosphorylated RNA, leading to a more labile monophosphorylated state that can stimulate subsequent ribonuclease cleavage. In Brucella abortus (strain 2308), this protein is RNA pyrophosphohydrolase.